Here is a 211-residue protein sequence, read N- to C-terminus: UPF0502 protein PC1_1804 (211 aa).

The segment at 168-188 is disordered; it reads SGDASDAAPEEEGAGDNSHQL.

The protein belongs to the UPF0502 family.

This Pectobacterium carotovorum subsp. carotovorum (strain PC1) protein is UPF0502 protein PC1_1804.